The chain runs to 91 residues: C-C motif chemokine 5 (91 aa).

The N-terminal stretch at Met1 to Ala23 is a signal peptide. Disulfide bonds link Cys33-Cys57 and Cys34-Cys73.

Belongs to the intercrine beta (chemokine CC) family.

Its subcellular location is the secreted. In terms of biological role, chemoattractant for blood monocytes, memory T-helper cells and eosinophils. Causes the release of histamine from basophils and activates eosinophils. May activate several chemokine receptors including CCR1, CCR3, CCR4 and CCR5. May also be an agonist of the G protein-coupled receptor GPR75. Together with GPR75, may play a role in neuron survival through activation of a downstream signaling pathway involving the PI3, Akt and MAP kinases. By activating GPR75 may also play a role in insulin secretion by islet cells. The sequence is that of C-C motif chemokine 5 (CCL5) from Canis lupus familiaris (Dog).